Reading from the N-terminus, the 1099-residue chain is Transmembrane protein 132C (1099 aa).

Positions Met1–Ser31 are cleaved as a signal peptide. The Extracellular segment spans residues Arg32–Asp915. Asn95 carries an N-linked (GlcNAc...) asparagine glycan. The disordered stretch occupies residues Gly237–Arg260. N-linked (GlcNAc...) asparagine glycosylation is found at Asn314 and Asn371. A disordered region spans residues Asp801–Asp872. A compositionally biased stretch (basic and acidic residues) spans Glu813 to Gly849. A helical transmembrane segment spans residues Leu916 to Ile936. The Cytoplasmic portion of the chain corresponds to Asn937–Val1099. The disordered stretch occupies residues Asn1002–Lys1045. Residues Gly1008 to Val1018 show a composition bias toward polar residues.

It belongs to the TMEM132 family.

It localises to the membrane. This is Transmembrane protein 132C (Tmem132c) from Mus musculus (Mouse).